The sequence spans 242 residues: Small ribosomal subunit protein uS2 (242 aa).

This sequence belongs to the universal ribosomal protein uS2 family.

The protein is Small ribosomal subunit protein uS2 of Shewanella piezotolerans (strain WP3 / JCM 13877).